The sequence spans 152 residues: Histone deacetylase complex subunit SAP18 (152 aa).

Positions 1-38 are disordered; that stretch reads MAEAARRQGGGRPLPPPPRGVNQQPPRPKPEPVDREKT. Over residues 28-38 the composition is skewed to basic and acidic residues; that stretch reads PKPEPVDREKT.

It belongs to the SAP18 family. In terms of assembly, interacts with SIN3, ERF3, ERF4 and HDA19. In terms of tissue distribution, ubiquitous, with low level in flowers.

Its function is as follows. Links the histone deacetylase complex to transcriptional repressors bound to chromatin. Involved in the tethering of the SIN3 complex to core histone proteins. The sequence is that of Histone deacetylase complex subunit SAP18 from Arabidopsis thaliana (Mouse-ear cress).